The sequence spans 391 residues: 3-ketoacyl-CoA thiolase (391 aa).

C95 (acyl-thioester intermediate) is an active-site residue. Catalysis depends on proton acceptor residues H347 and C377.

Belongs to the thiolase-like superfamily. Thiolase family. As to quaternary structure, heterotetramer of two alpha chains (FadB) and two beta chains (FadA).

The protein resides in the cytoplasm. The catalysed reaction is an acyl-CoA + acetyl-CoA = a 3-oxoacyl-CoA + CoA. It participates in lipid metabolism; fatty acid beta-oxidation. Functionally, catalyzes the final step of fatty acid oxidation in which acetyl-CoA is released and the CoA ester of a fatty acid two carbons shorter is formed. This Pseudomonas fluorescens (strain ATCC BAA-477 / NRRL B-23932 / Pf-5) protein is 3-ketoacyl-CoA thiolase.